We begin with the raw amino-acid sequence, 739 residues long: DNA ligase (739 aa).

The tract at residues 1 to 29 (MTANRPALPTRDKAVSDLSATEASDEHAA) is disordered. NAD(+)-binding positions include 51–55 (DADYD), 100–101 (SL), and glutamate 134. Lysine 136 functions as the N6-AMP-lysine intermediate in the catalytic mechanism. NAD(+) is bound by residues arginine 157, glutamate 194, lysine 311, and lysine 335. Residues cysteine 440, cysteine 443, cysteine 464, and cysteine 470 each contribute to the Zn(2+) site. The interval 592 to 612 (PTEMEEASEETPPTRRRKPQG) is disordered. One can recognise a BRCT domain in the interval 662 to 739 (ASTSPVSGKT…TEDEWFDLVG (78 aa)).

Belongs to the NAD-dependent DNA ligase family. LigA subfamily. It depends on Mg(2+) as a cofactor. Requires Mn(2+) as cofactor.

It catalyses the reaction NAD(+) + (deoxyribonucleotide)n-3'-hydroxyl + 5'-phospho-(deoxyribonucleotide)m = (deoxyribonucleotide)n+m + AMP + beta-nicotinamide D-nucleotide.. DNA ligase that catalyzes the formation of phosphodiester linkages between 5'-phosphoryl and 3'-hydroxyl groups in double-stranded DNA using NAD as a coenzyme and as the energy source for the reaction. It is essential for DNA replication and repair of damaged DNA. The chain is DNA ligase from Azorhizobium caulinodans (strain ATCC 43989 / DSM 5975 / JCM 20966 / LMG 6465 / NBRC 14845 / NCIMB 13405 / ORS 571).